Consider the following 610-residue polypeptide: 6(G)-fructosyltransferase (610 aa).

At 1-20 (MATSLQAPILGSRPPRRTLR) the chain is on the cytoplasmic side. Residues 21–38 (FLSFALFSALVLVVASFS) form a helical; Signal-anchor for type II membrane protein membrane-spanning segment. Residues 39–610 (SRKSESGSGL…NQYYPFTSSN (572 aa)) are Vacuolar-facing. Substrate-binding positions include 79-82 (YMND), Q98, W106, 141-142 (WT), and 207-208 (RD). The active site involves D82. N-linked (GlcNAc...) asparagine glycans are attached at residues N215, N229, and N248. E266 lines the substrate pocket. N459 carries an N-linked (GlcNAc...) asparagine glycan. A disulfide bridge links C460 with C508. N-linked (GlcNAc...) asparagine glycans are attached at residues N580 and N597.

It belongs to the glycosyl hydrolase 32 family. In terms of processing, might be processed in two N-terminal and C-terminal proteolytic fragments.

The protein resides in the vacuole membrane. The catalysed reaction is [1-beta-D-fructofuranosyl-(2-&gt;1)-]m+1 alpha-D-glucopyranoside + [1-beta-D-fructofuranosyl-(2-&gt;1)-]n+1 alpha-D-glucopyranoside = [1-beta-D-fructofuranosyl-(2-&gt;1)-]m alpha-D-glucopyranoside + [1-beta-D-fructofuranosyl-(2-&gt;1)-]n+1 beta-D-fructofuranosyl-(2-&gt;6)-alpha-D-glucopyranoside (m &gt; 0, n &gt;= 0).. Involved in the synthesis of fructan of the inulin neoseries. Has no 1-FFT activity. This Asparagus officinalis (Garden asparagus) protein is 6(G)-fructosyltransferase (FT1).